An 805-amino-acid polypeptide reads, in one-letter code: Phenylalanine--tRNA ligase beta subunit (805 aa).

Residues 39–148 (APPFTGVVVA…AALRPGTDIR (110 aa)) form the tRNA-binding domain. The region spanning 399 to 474 (PVREPVRMRL…RVYGFERIPD (76 aa)) is the B5 domain. Mg(2+) is bound by residues D452, D458, E461, and E462. Positions 703–804 (SRQPAVVRDL…LVAAHNARQR (102 aa)) constitute an FDX-ACB domain.

Belongs to the phenylalanyl-tRNA synthetase beta subunit family. Type 1 subfamily. As to quaternary structure, tetramer of two alpha and two beta subunits. It depends on Mg(2+) as a cofactor.

It is found in the cytoplasm. The catalysed reaction is tRNA(Phe) + L-phenylalanine + ATP = L-phenylalanyl-tRNA(Phe) + AMP + diphosphate + H(+). The sequence is that of Phenylalanine--tRNA ligase beta subunit from Bordetella bronchiseptica (strain ATCC BAA-588 / NCTC 13252 / RB50) (Alcaligenes bronchisepticus).